The sequence spans 373 residues: PqqA peptide cyclase (373 aa).

A Radical SAM core domain is found at 9–224 (LTKPRWLLAE…QSYKEKVKGR (216 aa)). [4Fe-4S] cluster is bound by residues cysteine 23, cysteine 27, and cysteine 30.

It belongs to the radical SAM superfamily. PqqE family. In terms of assembly, interacts with PqqD. The interaction is necessary for activity of PqqE. The cofactor is [4Fe-4S] cluster.

It carries out the reaction [PQQ precursor protein] + S-adenosyl-L-methionine = E-Y cross-linked-[PQQ precursor protein] + 5'-deoxyadenosine + L-methionine + H(+). It functions in the pathway cofactor biosynthesis; pyrroloquinoline quinone biosynthesis. Catalyzes the cross-linking of a glutamate residue and a tyrosine residue in the PqqA protein as part of the biosynthesis of pyrroloquinoline quinone (PQQ). The polypeptide is PqqA peptide cyclase (Methylococcus capsulatus (strain ATCC 33009 / NCIMB 11132 / Bath)).